Consider the following 420-residue polypeptide: Transcription factor bHLH89 (420 aa).

The disordered stretch occupies residues 196 to 216 (EENNNLDDGLNRKGRGSKKRK). The span at 207-216 (RKGRGSKKRK) shows a compositional bias: basic residues. The bHLH domain occupies 212–261 (SKKRKIFPTERERRVHFKDRFGDLKNLIPNPTKNDRASIVGEAIDYIKEL).

As to quaternary structure, homodimer. In terms of tissue distribution, flowers.

Its subcellular location is the nucleus. The protein is Transcription factor bHLH89 (BHLH89) of Arabidopsis thaliana (Mouse-ear cress).